A 260-amino-acid polypeptide reads, in one-letter code: Sulfoquinovose 1-dehydrogenase (260 aa).

Y160 serves as the catalytic Proton acceptor.

Belongs to the short-chain dehydrogenases/reductases (SDR) family.

It carries out the reaction 6-sulfo-D-quinovose + NAD(+) = 6-deoxy-6-sulfo-D-glucono-1,5-lactone + NADH + H(+). In terms of biological role, catalyzes the oxidation of sulfoquinovose to 6-deoxy-6-sulfo-D-glucono-1,5-lactone, with a strong preference for NAD(+) as the electron acceptor. Is involved in a degradation pathway of sulfoquinovose (SQ) that allows P.putida SQ1 to use SQ as the sole carbon and energy source for growth. This Pseudomonas putida (Arthrobacter siderocapsulatus) protein is Sulfoquinovose 1-dehydrogenase.